A 327-amino-acid polypeptide reads, in one-letter code: Probable cell division protein WhiA (327 aa).

The segment at residues 275 to 308 (SLEELGRLADPPMTKDAVAGRIRRLLSMADRKAK) is a DNA-binding region (H-T-H motif).

Belongs to the WhiA family.

Its function is as follows. Involved in cell division and chromosome segregation. This is Probable cell division protein WhiA from Mycobacterium leprae (strain Br4923).